We begin with the raw amino-acid sequence, 468 residues long: Bifunctional protein HldE (468 aa).

The ribokinase stretch occupies residues 1–315 (MAKKVEILVV…ELLRSRANAE (315 aa)). Residue 192-195 (NRKE) participates in ATP binding. Residue Asp-260 is part of the active site. The segment at 340-468 (FTNGCFDILH…IVKRIKDADK (129 aa)) is cytidylyltransferase.

In the N-terminal section; belongs to the carbohydrate kinase PfkB family. The protein in the C-terminal section; belongs to the cytidylyltransferase family. Homodimer.

The catalysed reaction is D-glycero-beta-D-manno-heptose 7-phosphate + ATP = D-glycero-beta-D-manno-heptose 1,7-bisphosphate + ADP + H(+). It carries out the reaction D-glycero-beta-D-manno-heptose 1-phosphate + ATP + H(+) = ADP-D-glycero-beta-D-manno-heptose + diphosphate. It functions in the pathway nucleotide-sugar biosynthesis; ADP-L-glycero-beta-D-manno-heptose biosynthesis; ADP-L-glycero-beta-D-manno-heptose from D-glycero-beta-D-manno-heptose 7-phosphate: step 1/4. The protein operates within nucleotide-sugar biosynthesis; ADP-L-glycero-beta-D-manno-heptose biosynthesis; ADP-L-glycero-beta-D-manno-heptose from D-glycero-beta-D-manno-heptose 7-phosphate: step 3/4. Its function is as follows. Catalyzes the phosphorylation of D-glycero-D-manno-heptose 7-phosphate at the C-1 position to selectively form D-glycero-beta-D-manno-heptose-1,7-bisphosphate. Catalyzes the ADP transfer from ATP to D-glycero-beta-D-manno-heptose 1-phosphate, yielding ADP-D-glycero-beta-D-manno-heptose. The chain is Bifunctional protein HldE from Campylobacter curvus (strain 525.92).